A 247-amino-acid chain; its full sequence is Chloride intracellular channel protein 2 (247 aa).

An N-terminal region spans residues 1–94; sequence MSGLRPGTQV…KIEEFLEQTL (94 aa). The required for insertion into the membrane stretch occupies residues 1 to 96; it reads MSGLRPGTQV…EEFLEQTLAP (96 aa). Glu-25 contacts glutathione. A G-site motif is present at residues 30-33; it reads CPFC. Cysteines 30 and 33 form a disulfide. A helical transmembrane segment spans residues 32 to 52; sequence FCQRLFMILWLKGVKFNVTTV. The GST C-terminal domain maps to 76-239; it reads NKELKTDFIK…PEDKEIENTY (164 aa). The segment at 95–106 is joint loop; sequence APPRYPHLSPKY. The C-terminal stretch occupies residues 107 to 247; it reads KESFDVGCNL…TYANVAKQKS (141 aa). The foot loop stretch occupies residues 151–171; the sequence is NTPLLDEIDPDSAEEPPVSRR. His-227 contacts glutathione.

The protein belongs to the chloride channel CLIC family. Monomer. Interacts with TRAPPC2 and RYR2. In terms of tissue distribution, expressed in adult and fetal brain, heart, skeletal muscle, liver, lung, and spleen. Detected in adult stomach and testis. Expressed in fetal thymus and kidney.

It is found in the cytoplasm. It localises to the membrane. It catalyses the reaction chloride(in) = chloride(out). The catalysed reaction is tert-butyl hydroperoxide + 2 glutathione = tert-butanol + glutathione disulfide + H2O. The enzyme catalyses cumene hydroperoxide + 2 glutathione = 2-phenylpropan-2-ol + glutathione disulfide + H2O. Its activity is regulated as follows. The channel conductance is regulated by pH. In terms of biological role, in the soluble state, catalyzes glutaredoxin-like thiol disulfide exchange reactions with reduced glutathione as electron donor. Displays weak glutathione peroxidase activity. Can insert into membranes and form chloride ion channels. Membrane insertion seems to be redox-regulated and may occur only under oxidizing conditions. Modulates the activity of RYR2 and inhibits calcium influx. This chain is Chloride intracellular channel protein 2, found in Homo sapiens (Human).